A 121-amino-acid polypeptide reads, in one-letter code: Small ribosomal subunit protein uS13 (121 aa).

The interval 94–121 (GLPVRGQNTKNNARTRKGKAVAIAGKKK) is disordered. Over residues 106–121 (ARTRKGKAVAIAGKKK) the composition is skewed to basic residues.

The protein belongs to the universal ribosomal protein uS13 family. In terms of assembly, part of the 30S ribosomal subunit. Forms a loose heterodimer with protein S19. Forms two bridges to the 50S subunit in the 70S ribosome.

Functionally, located at the top of the head of the 30S subunit, it contacts several helices of the 16S rRNA. In the 70S ribosome it contacts the 23S rRNA (bridge B1a) and protein L5 of the 50S subunit (bridge B1b), connecting the 2 subunits; these bridges are implicated in subunit movement. Contacts the tRNAs in the A and P-sites. The polypeptide is Small ribosomal subunit protein uS13 (Streptococcus sanguinis (strain SK36)).